The primary structure comprises 839 residues: DNA gyrase subunit A (839 aa).

One can recognise a Topo IIA-type catalytic domain in the interval 46–510; the sequence is LPDARDGLKP…ISEDIDDEDL (465 aa). Tyr134 serves as the catalytic O-(5'-phospho-DNA)-tyrosine intermediate. Residues 537-543 carry the GyrA-box motif; the sequence is QHRGGVG.

It belongs to the type II topoisomerase GyrA/ParC subunit family. Heterotetramer, composed of two GyrA and two GyrB chains. In the heterotetramer, GyrA contains the active site tyrosine that forms a transient covalent intermediate with DNA, while GyrB binds cofactors and catalyzes ATP hydrolysis.

It localises to the cytoplasm. The enzyme catalyses ATP-dependent breakage, passage and rejoining of double-stranded DNA.. In terms of biological role, a type II topoisomerase that negatively supercoils closed circular double-stranded (ds) DNA in an ATP-dependent manner to modulate DNA topology and maintain chromosomes in an underwound state. Negative supercoiling favors strand separation, and DNA replication, transcription, recombination and repair, all of which involve strand separation. Also able to catalyze the interconversion of other topological isomers of dsDNA rings, including catenanes and knotted rings. Type II topoisomerases break and join 2 DNA strands simultaneously in an ATP-dependent manner. The chain is DNA gyrase subunit A from Mycoplasma pneumoniae (strain ATCC 29342 / M129 / Subtype 1) (Mycoplasmoides pneumoniae).